Here is a 401-residue protein sequence, read N- to C-terminus: MKAITLLGSTGSIGTQTLDIVAQYPDQFRIVGMAAGRNIELLSQQIRQFRPEIVAIADPNQLSDLKDAIADVDPQPQLLAGEAGVVEVAAYGDAESVVTGIVGCAGLLPTIAAIKAGKDIALANKETLIAGGPVVLPLVEKHGVKLLPADSEHSAIFQCLQGVPEGGLRRIILTASGGAFRDWPVEKLPEVTVADALKHPNWSMGKKITVDSATLMNKGLEVIEAHYLFGVDYDHIDIVIHPQSIIHSLIELQDTSVLAQLGWPDMRLPLLYSLSWPERIATDWEQLDLVKSGDLTFREPNHQKYPCMQLAYDVGRMGGAMPAVMNAANEQAVALFLEEKISFLDIPKVIETACDRYQSQNTLQPSLEDILAADQWARQEILTISQSQTPVVTASPQLSAI.

NADPH-binding residues include threonine 10, glycine 11, serine 12, isoleucine 13, glycine 36, arginine 37, asparagine 38, and asparagine 124. Lysine 125 contacts 1-deoxy-D-xylulose 5-phosphate. An NADPH-binding site is contributed by glutamate 126. A Mn(2+)-binding site is contributed by aspartate 150. The 1-deoxy-D-xylulose 5-phosphate site is built by serine 151, glutamate 152, serine 176, and histidine 199. Glutamate 152 provides a ligand contact to Mn(2+). Glycine 205 lines the NADPH pocket. Residues serine 212, asparagine 217, lysine 218, and glutamate 221 each contribute to the 1-deoxy-D-xylulose 5-phosphate site. Residue glutamate 221 coordinates Mn(2+).

It belongs to the DXR family. It depends on Mg(2+) as a cofactor. Mn(2+) serves as cofactor.

The enzyme catalyses 2-C-methyl-D-erythritol 4-phosphate + NADP(+) = 1-deoxy-D-xylulose 5-phosphate + NADPH + H(+). It participates in isoprenoid biosynthesis; isopentenyl diphosphate biosynthesis via DXP pathway; isopentenyl diphosphate from 1-deoxy-D-xylulose 5-phosphate: step 1/6. Functionally, catalyzes the NADPH-dependent rearrangement and reduction of 1-deoxy-D-xylulose-5-phosphate (DXP) to 2-C-methyl-D-erythritol 4-phosphate (MEP). This Acaryochloris marina (strain MBIC 11017) protein is 1-deoxy-D-xylulose 5-phosphate reductoisomerase.